A 447-amino-acid polypeptide reads, in one-letter code: tRNA-2-methylthio-N(6)-dimethylallyladenosine synthase (447 aa).

One can recognise an MTTase N-terminal domain in the interval 10–128; it reads KLFCISTYGC…FPEYLHRVLQ (119 aa). [4Fe-4S] cluster-binding residues include Cys-19, Cys-55, Cys-89, Cys-165, Cys-169, and Cys-172. A Radical SAM core domain is found at 151 to 382; that stretch reads RKSDVKAFVT…EAINKKVVIK (232 aa). One can recognise a TRAM domain in the interval 384-447; that stretch reads KEYEGKVVEV…PFSLIGEIVE (64 aa).

This sequence belongs to the methylthiotransferase family. MiaB subfamily. As to quaternary structure, monomer. [4Fe-4S] cluster serves as cofactor.

It is found in the cytoplasm. The catalysed reaction is N(6)-dimethylallyladenosine(37) in tRNA + (sulfur carrier)-SH + AH2 + 2 S-adenosyl-L-methionine = 2-methylsulfanyl-N(6)-dimethylallyladenosine(37) in tRNA + (sulfur carrier)-H + 5'-deoxyadenosine + L-methionine + A + S-adenosyl-L-homocysteine + 2 H(+). Functionally, catalyzes the methylthiolation of N6-(dimethylallyl)adenosine (i(6)A), leading to the formation of 2-methylthio-N6-(dimethylallyl)adenosine (ms(2)i(6)A) at position 37 in tRNAs that read codons beginning with uridine. The chain is tRNA-2-methylthio-N(6)-dimethylallyladenosine synthase from Clostridium perfringens (strain SM101 / Type A).